The primary structure comprises 55 residues: uncharacterized protein (55 aa).

This is an uncharacterized protein from Mycoplasma mycoides.